A 262-amino-acid polypeptide reads, in one-letter code: tRNA 4-demethylwyosine(37)-methyltransferase Taw21 (262 aa).

Residues His108, Phe125, 148 to 149 (DL), and 175 to 176 (DA) contribute to the S-adenosyl-L-methionine site.

This sequence belongs to the class I-like SAM-binding methyltransferase superfamily. TRM5/TYW2 family.

The protein resides in the cytoplasm. It carries out the reaction 4-demethylwyosine(37) in tRNA(Phe) + S-adenosyl-L-methionine = isowyosine(37) in tRNA(Phe) + S-adenosyl-L-homocysteine + H(+). Functionally, catalyzes the C7-methylation of 4-demethylwyosine (imG-14) at position 37 in tRNA(Phe). The chain is tRNA 4-demethylwyosine(37)-methyltransferase Taw21 from Saccharolobus solfataricus (strain ATCC 35092 / DSM 1617 / JCM 11322 / P2) (Sulfolobus solfataricus).